The sequence spans 64 residues: MHCLPVLVILLLLIASTPSVDARPKTKDDVPPASFHGADDANRILQTLWNLRGCCEDKTCCFIG.

Positions 1–22 are cleaved as a signal peptide; sequence MHCLPVLVILLLLIASTPSVDA. A propeptide spanning residues 23–52 is cleaved from the precursor; sequence RPKTKDDVPPASFHGADDANRILQTLWNLR. Ile63 bears the Isoleucine amide mark.

This sequence belongs to the conotoxin T superfamily. In terms of processing, contains 2 disulfide bonds that can be either 'C1-C3, C2-C4' or 'C1-C4, C2-C3', since these disulfide connectivities have been observed for conotoxins with cysteine framework V (for examples, see AC P0DQQ7 and AC P81755). Expressed by the venom duct.

The protein localises to the secreted. The polypeptide is Conotoxin Ts-011 (Conus tessulatus (Tessellate cone)).